Consider the following 240-residue polypeptide: Probable transcriptional regulatory protein HPG27_148 (240 aa).

It belongs to the TACO1 family.

It is found in the cytoplasm. The chain is Probable transcriptional regulatory protein HPG27_148 from Helicobacter pylori (strain G27).